The following is a 699-amino-acid chain: Polyribonucleotide nucleotidyltransferase (699 aa).

Mg(2+) is bound by residues Asp485 and Asp491. Residues 552 to 611 (PRITTIKINPEKIRDVIGKGGAVIRALTEETGTTIELEDDGTVKIASSNGDATREAIRRI) form the KH domain. Positions 621-689 (GRIYNGKVIR…RQGRVRLSIK (69 aa)) constitute an S1 motif domain.

This sequence belongs to the polyribonucleotide nucleotidyltransferase family. In terms of assembly, component of the RNA degradosome, which is a multiprotein complex involved in RNA processing and mRNA degradation. Requires Mg(2+) as cofactor.

The protein resides in the cytoplasm. It carries out the reaction RNA(n+1) + phosphate = RNA(n) + a ribonucleoside 5'-diphosphate. Involved in mRNA degradation. Catalyzes the phosphorolysis of single-stranded polyribonucleotides processively in the 3'- to 5'-direction. This chain is Polyribonucleotide nucleotidyltransferase, found in Shewanella sp. (strain ANA-3).